The sequence spans 662 residues: UvrABC system protein B (662 aa).

A Helicase ATP-binding domain is found at 31 to 188; that stretch reads DNIEGGEKAQ…NDLVDIQFER (158 aa). Position 44–51 (44–51) interacts with ATP; that stretch reads GATGTGKT. The Beta-hairpin signature appears at 97–120; it reads YYDYYQPEAYVPSSDTYIEKDSSV. Positions 435 to 601 constitute a Helicase C-terminal domain; that stretch reads QIDDLLGEIN…TIKKEIRDLI (167 aa). The UVR domain occupies 626-661; sequence KELVKKLEKQMQEAVEVLDFELAAQIRDMMLEVKAL.

It belongs to the UvrB family. As to quaternary structure, forms a heterotetramer with UvrA during the search for lesions. Interacts with UvrC in an incision complex.

The protein localises to the cytoplasm. In terms of biological role, the UvrABC repair system catalyzes the recognition and processing of DNA lesions. A damage recognition complex composed of 2 UvrA and 2 UvrB subunits scans DNA for abnormalities. Upon binding of the UvrA(2)B(2) complex to a putative damaged site, the DNA wraps around one UvrB monomer. DNA wrap is dependent on ATP binding by UvrB and probably causes local melting of the DNA helix, facilitating insertion of UvrB beta-hairpin between the DNA strands. Then UvrB probes one DNA strand for the presence of a lesion. If a lesion is found the UvrA subunits dissociate and the UvrB-DNA preincision complex is formed. This complex is subsequently bound by UvrC and the second UvrB is released. If no lesion is found, the DNA wraps around the other UvrB subunit that will check the other stand for damage. This chain is UvrABC system protein B, found in Streptococcus pneumoniae serotype 19F (strain G54).